The sequence spans 590 residues: L-fucose isomerase (590 aa).

Catalysis depends on proton acceptor residues E337 and D361. The Mn(2+) site is built by E337, D361, and H528.

The protein belongs to the L-fucose isomerase family. Mn(2+) is required as a cofactor.

It is found in the cytoplasm. It catalyses the reaction L-fucose = L-fuculose. The protein operates within carbohydrate degradation; L-fucose degradation; L-lactaldehyde and glycerone phosphate from L-fucose: step 1/3. Functionally, converts the aldose L-fucose into the corresponding ketose L-fuculose. This is L-fucose isomerase from Bacteroides fragilis (strain ATCC 25285 / DSM 2151 / CCUG 4856 / JCM 11019 / LMG 10263 / NCTC 9343 / Onslow / VPI 2553 / EN-2).